Consider the following 367-residue polypeptide: Eukaryotic translation initiation factor 3 subunit H (367 aa).

In terms of domain architecture, MPN spans 14-166 (VQVEALVVMK…LRAFRLSPTF (153 aa)).

Belongs to the eIF-3 subunit H family. Component of the eukaryotic translation initiation factor 3 (eIF-3) complex.

It is found in the cytoplasm. In terms of biological role, component of the eukaryotic translation initiation factor 3 (eIF-3) complex, which is involved in protein synthesis of a specialized repertoire of mRNAs and, together with other initiation factors, stimulates binding of mRNA and methionyl-tRNAi to the 40S ribosome. The eIF-3 complex specifically targets and initiates translation of a subset of mRNAs involved in cell proliferation. In Botryotinia fuckeliana (strain B05.10) (Noble rot fungus), this protein is Eukaryotic translation initiation factor 3 subunit H.